Consider the following 431-residue polypeptide: Enolase (431 aa).

A (2R)-2-phosphoglycerate-binding site is contributed by Gln-166. Glu-208 functions as the Proton donor in the catalytic mechanism. 3 residues coordinate Mg(2+): Asp-245, Glu-288, and Asp-315. Positions 340, 369, 370, and 391 each coordinate (2R)-2-phosphoglycerate. Catalysis depends on Lys-340, which acts as the Proton acceptor.

Belongs to the enolase family. Mg(2+) is required as a cofactor.

Its subcellular location is the cytoplasm. It localises to the secreted. The protein localises to the cell surface. The catalysed reaction is (2R)-2-phosphoglycerate = phosphoenolpyruvate + H2O. Its pathway is carbohydrate degradation; glycolysis; pyruvate from D-glyceraldehyde 3-phosphate: step 4/5. In terms of biological role, catalyzes the reversible conversion of 2-phosphoglycerate (2-PG) into phosphoenolpyruvate (PEP). It is essential for the degradation of carbohydrates via glycolysis. This chain is Enolase, found in Clostridium acetobutylicum (strain ATCC 824 / DSM 792 / JCM 1419 / IAM 19013 / LMG 5710 / NBRC 13948 / NRRL B-527 / VKM B-1787 / 2291 / W).